Here is a 552-residue protein sequence, read N- to C-terminus: Arginine--tRNA ligase (552 aa).

The short motif at 124–134 is the 'HIGH' region element; sequence GNPTGPLHLAH.

The protein belongs to the class-I aminoacyl-tRNA synthetase family. As to quaternary structure, monomer.

It localises to the cytoplasm. It carries out the reaction tRNA(Arg) + L-arginine + ATP = L-arginyl-tRNA(Arg) + AMP + diphosphate. This chain is Arginine--tRNA ligase, found in Tropheryma whipplei (strain Twist) (Whipple's bacillus).